Here is a 582-residue protein sequence, read N- to C-terminus: 15-cis-phytoene desaturase, chloroplastic/chromoplastic (582 aa).

Residues M1 to E93 constitute a chloroplast and chromoplast transit peptide. FAD contacts are provided by residues A121, E140–A141, K148, H165–I166, and Y171. R306 is a binding site for substrate. D537 is a binding site for FAD. A545 lines the substrate pocket. Residue M547 participates in FAD binding.

The protein belongs to the carotenoid/retinoid oxidoreductase family. Homotetramer. Requires FAD as cofactor. As to expression, expressed in flower buds and lips. Lower expression in leaves and roots.

Its subcellular location is the plastid. The protein localises to the chloroplast. It localises to the chromoplast. It is found in the membrane. It carries out the reaction 2 a plastoquinone + 15-cis-phytoene = 9,9',15-tri-cis-zeta-carotene + 2 a plastoquinol. The protein operates within carotenoid biosynthesis; lycopene biosynthesis. Converts phytoene into zeta-carotene via the intermediary of phytofluene by the symmetrical introduction of two double bonds at the C-11 and C-11' positions of phytoene with a concomitant isomerization of two neighboring double bonds at the C9 and C9' positions from trans to cis. The sequence is that of 15-cis-phytoene desaturase, chloroplastic/chromoplastic (PDS) from Oncidium hybrid cultivar (Orchid).